A 758-amino-acid chain; its full sequence is MAILSHTLGFPRVGLHRELKKAQESYWAGNISQQQLLETGRELRARHWQQQKDAGVDLLPVGDFAWYDHVLTTSLMLDNVPARHRSGANESDIDTLFRIGRGRAPTGEPAAAAEMTKWFNTNYHYMVPEFTLGQQFRLGWTQLLDEVDEALALGHRVKPVLLGPVSYLWLGKVKGEAFDRLSLLPALLPVYKQVLGELAKRGVDWVQIDEQALVLELPQAWREAYREAYQALQGQTKLLLTTYFDSIRHQLDIITALPVQGLHVDLVAGDDDLTELHRQLPAEWVLSAGVINGRNVWRADLQSWFEQLRPLLGKRELWLGSSCSLLHSPIDLSTETQLDEEVKSWFAFALQKCAELGLLRAALNAPDEANQARLGEYSAPIRARRHSSRVHNPEVKARLEKITAADSQRQQPYAARAALQRARFKLPAWPTTTIGSFPQTTEIRGLRLDFKRGRLDGGHYRTGISEHIKQAIVEQERLGLDVLVHGEAERNDMVEYFGEHLDGFVFTQNGWVQSYGSRCVKPPIIIGDISRPEAITIEWARYAQSLTAKPVKGMLTGPVTILCWSFPREDVSRKTIARQIALALRDEVADLEQAGIGVIQIDEPALREGLPLKHSAWQDYLTWAVEAFRLNAAVAQDDTQIHTHMCYCEFNDIMDSIAALDADVITIETSRSDMELLETFKEFDYPNEIGPGVYDIHSPNVPSEEWIVELLRKAAQRIPAERLWVNPDCGLKTRAWPETRQSLANMVTAARKLREEQP.

5-methyltetrahydropteroyltri-L-glutamate contacts are provided by residues 17–20 (RELK) and Lys-117. L-homocysteine contacts are provided by residues 434–436 (IGS) and Glu-487. L-methionine contacts are provided by residues 434 to 436 (IGS) and Glu-487. 5-methyltetrahydropteroyltri-L-glutamate-binding positions include 518-519 (RC) and Trp-564. Asp-602 is an L-homocysteine binding site. Asp-602 is a binding site for L-methionine. Glu-608 provides a ligand contact to 5-methyltetrahydropteroyltri-L-glutamate. Zn(2+)-binding residues include His-644, Cys-646, and Glu-668. The Proton donor role is filled by His-697. Cys-729 is a Zn(2+) binding site.

This sequence belongs to the vitamin-B12 independent methionine synthase family. Zn(2+) serves as cofactor.

It carries out the reaction 5-methyltetrahydropteroyltri-L-glutamate + L-homocysteine = tetrahydropteroyltri-L-glutamate + L-methionine. It functions in the pathway amino-acid biosynthesis; L-methionine biosynthesis via de novo pathway; L-methionine from L-homocysteine (MetE route): step 1/1. In terms of biological role, catalyzes the transfer of a methyl group from 5-methyltetrahydrofolate to homocysteine resulting in methionine formation. This Sodalis glossinidius (strain morsitans) protein is 5-methyltetrahydropteroyltriglutamate--homocysteine methyltransferase.